A 153-amino-acid chain; its full sequence is MLKEKVEKLAEKVFEENNSLFLISLDINSANHIKIVLDGDEGVSVNDCIMVSRGIEHNLDREEEDFSLEVTSAGVSEPLSMPRQYKKNIGRRLQVKTENDKFEADLLSADQNEIKLSWKAREPKPVGKGKVTVQKEVVLPYTDIVEAKVKITF.

This sequence belongs to the RimP family.

The protein localises to the cytoplasm. Functionally, required for maturation of 30S ribosomal subunits. This chain is Ribosome maturation factor RimP, found in Christiangramia forsetii (strain DSM 17595 / CGMCC 1.15422 / KT0803) (Gramella forsetii).